Here is a 488-residue protein sequence, read N- to C-terminus: MAETSLLEAGASAASTAAALENLQVEASCSVCLEYLKEPVIIECGHNFCKACITRWWEDLERDFPCPVCRKTSRYRSLRPNRQLGSMVEIAKQLQTVKRKIRDESLCSQHHEPLSLFCYEDQEAVCLICAISHTHRPHTVVPMDDATQEYKEKLQKCLEPLEQKLQEITCCKASEEKKPGELKRLVESRRQQILKEFEELHRRLDEEQQTLLSRLEEEEQDILQRLRENAAHLGDRRRDLAHLAAEVEGKCLQSGFEMLKDVKSTLEKCEKVKTMEVTSVSIELEKNFSNFPRQYFALRKILKQLIADVTLDPETAHPNLVLSEDRKSVKFVETRLRDLPDTPQRFTFYPCVLATEGFTSGRHYWEVEVGDKTHWAVGVCRDSVSRKGELTPLPETGYWRVRLWNGDKYAATTTPFTPLHIKVKPKRVGIFLDYEAGTLSFYNVTDRSHIYTFTDTFTEKLWPLFYPGIRAGRKNAAPLTIRPPTDWE.

Residues Cys29–Arg70 form an RING-type zinc finger. The segment at Arg102–Met143 adopts a B box-type zinc-finger fold. Residues Cys107, His110, Cys129, and His135 each contribute to the Zn(2+) site. A coiled-coil region spans residues Glu181–Lys250. Interaction with CDKN1A stretches follow at residues Lys268 to Ala307 and Thr359 to Glu488. The region spanning Ser289–Pro484 is the B30.2/SPRY domain.

It belongs to the TRIM/RBCC family. As to quaternary structure, interacts with MOAP1. Interacts with CDKN1A. Post-translationally, autoubiquitinated.

It is found in the cytoplasm. The protein localises to the cytosol. The protein resides in the mitochondrion. It localises to the nucleus. The enzyme catalyses S-ubiquitinyl-[E2 ubiquitin-conjugating enzyme]-L-cysteine + [acceptor protein]-L-lysine = [E2 ubiquitin-conjugating enzyme]-L-cysteine + N(6)-ubiquitinyl-[acceptor protein]-L-lysine.. Its pathway is protein modification; protein ubiquitination. E3 ubiquitin-protein ligase. May facilitate apoptosis by inhibiting APC/C-Cdh1-mediated poly-ubiquitination and subsequent proteasome-mediated degradation of the pro-apoptotic protein MOAP1. Regulates the G1/S transition of the cell cycle and DNA damage-induced G2 arrest by stabilizing CDKN1A/p21. Positively regulates CDKN1A/p21 stability by competing with DTL for CDKN1A/p21 binding, therefore disrupting DCX(DTL) E3 ubiquitin ligase complex-mediated CDKN1A/p21 ubiquitination and degradation. This Mus musculus (Mouse) protein is E3 ubiquitin-protein ligase TRIM39 (Trim39).